An 82-amino-acid chain; its full sequence is Immediate early response 3-interacting protein 1 (82 aa).

A run of 2 helical transmembrane segments spans residues 2-22 (AFTLYALIQTAILFTNAIAVL) and 62-82 (VMRVPLIAVNSVCIVLLLLFG).

Belongs to the YOS1 family.

Its subcellular location is the endoplasmic reticulum membrane. In terms of biological role, regulator of endoplasmic reticulum secretion that acts as a key determinant of brain size. Required for secretion of extracellular matrix proteins. Required for correct brain development by depositing sufficient extracellular matrix proteins for tissue integrity and the proliferation of neural progenitors. Acts as a regulator of the unfolded protein response (UPR). This is Immediate early response 3-interacting protein 1 from Danio rerio (Zebrafish).